A 526-amino-acid chain; its full sequence is Lysine--tRNA ligase (526 aa).

Mg(2+) is bound by residues Glu-431 and Glu-438.

This sequence belongs to the class-II aminoacyl-tRNA synthetase family. In terms of assembly, homodimer. The cofactor is Mg(2+).

Its subcellular location is the cytoplasm. It carries out the reaction tRNA(Lys) + L-lysine + ATP = L-lysyl-tRNA(Lys) + AMP + diphosphate. This is Lysine--tRNA ligase from Chlamydia felis (strain Fe/C-56) (Chlamydophila felis).